The sequence spans 379 residues: Deoxyguanosinetriphosphate triphosphohydrolase-like protein (379 aa).

In terms of domain architecture, HD spans 69–200; it reads RLTHTIEVAQ…ANLADEIAYS (132 aa).

This sequence belongs to the dGTPase family. Type 2 subfamily.

In Azoarcus sp. (strain BH72), this protein is Deoxyguanosinetriphosphate triphosphohydrolase-like protein.